Reading from the N-terminus, the 293-residue chain is Ethanolamine ammonia-lyase small subunit (293 aa).

The adenosylcob(III)alamin site is built by Val207 and Glu228.

The protein belongs to the EutC family. As to quaternary structure, the basic unit is a heterodimer which dimerizes to form tetramers. The heterotetramers trimerize; 6 large subunits form a core ring with 6 small subunits projecting outwards. Adenosylcob(III)alamin is required as a cofactor.

The protein localises to the bacterial microcompartment. It catalyses the reaction ethanolamine = acetaldehyde + NH4(+). It participates in amine and polyamine degradation; ethanolamine degradation. In terms of biological role, catalyzes the deamination of various vicinal amino-alcohols to oxo compounds. Allows this organism to utilize ethanolamine as the sole source of nitrogen and carbon in the presence of external vitamin B12. This chain is Ethanolamine ammonia-lyase small subunit, found in Listeria innocua serovar 6a (strain ATCC BAA-680 / CLIP 11262).